The primary structure comprises 123 residues: Small ribosomal subunit protein bS16 (123 aa).

This sequence belongs to the bacterial ribosomal protein bS16 family.

In Treponema pallidum (strain Nichols), this protein is Small ribosomal subunit protein bS16.